Reading from the N-terminus, the 108-residue chain is Protein YcgL (108 aa).

The region spanning methionine 12 to leucine 96 is the YcgL domain.

This is Protein YcgL from Shigella sonnei (strain Ss046).